The primary structure comprises 390 residues: Succinyl-diaminopimelate desuccinylase 1 (390 aa).

Histidine 76 is a binding site for Zn(2+). Aspartate 78 is an active-site residue. Residue aspartate 109 participates in Zn(2+) binding. The active-site Proton acceptor is the glutamate 143. Residues glutamate 144, glutamate 172, and histidine 363 each contribute to the Zn(2+) site.

Belongs to the peptidase M20A family. DapE subfamily. In terms of assembly, homodimer. The cofactor is Zn(2+). It depends on Co(2+) as a cofactor.

The enzyme catalyses N-succinyl-(2S,6S)-2,6-diaminopimelate + H2O = (2S,6S)-2,6-diaminopimelate + succinate. Its pathway is amino-acid biosynthesis; L-lysine biosynthesis via DAP pathway; LL-2,6-diaminopimelate from (S)-tetrahydrodipicolinate (succinylase route): step 3/3. In terms of biological role, catalyzes the hydrolysis of N-succinyl-L,L-diaminopimelic acid (SDAP), forming succinate and LL-2,6-diaminopimelate (DAP), an intermediate involved in the bacterial biosynthesis of lysine and meso-diaminopimelic acid, an essential component of bacterial cell walls. In Alteromonas mediterranea (strain DSM 17117 / CIP 110805 / LMG 28347 / Deep ecotype), this protein is Succinyl-diaminopimelate desuccinylase 1.